An 89-amino-acid polypeptide reads, in one-letter code: Small ribosomal subunit protein uS15 (89 aa).

The protein belongs to the universal ribosomal protein uS15 family. Part of the 30S ribosomal subunit. Forms a bridge to the 50S subunit in the 70S ribosome, contacting the 23S rRNA.

Functionally, one of the primary rRNA binding proteins, it binds directly to 16S rRNA where it helps nucleate assembly of the platform of the 30S subunit by binding and bridging several RNA helices of the 16S rRNA. Forms an intersubunit bridge (bridge B4) with the 23S rRNA of the 50S subunit in the ribosome. The sequence is that of Small ribosomal subunit protein uS15 from Bacillus anthracis (strain CDC 684 / NRRL 3495).